The primary structure comprises 410 residues: Cytochrome P450 monooxygenase mpsF (410 aa).

Residue C355 participates in heme binding.

This sequence belongs to the cytochrome P450 family. Heme serves as cofactor.

Its pathway is secondary metabolite biosynthesis. Functionally, cytochrome P450 monooxygenase; part of the gene cluster that mediates the biosynthesis of macrophasetins, 3-decalinoyltetramic acids (DTAs) which feature a tetramate (pyrrolidine-2,4-dione) unit connected to a decalin fragment and that have potent bioactivities. The PKS-NRPS mpsA together with its associated enoylreductase partner mpsG incorporate one unit of acetyl-CoA, seven units of malonyl-CoA, and one unit of L-alanine to assemble the linear tetramic acid intermediate corresponding to the backbone of macrophasetins. Without the Diels-Alderase mpsD, the mpsA/G product can undergo the non-enzymatic intramolecular Diels-Alder (IMDA) reaction to generate both macrophasetin A and macrophasetin B. Catalyzed by mpsD, the linear tetramic acid intermediate is thoroughly converted to macrophasetin A via the endo-IMDA reaction in a regioselective and stereoselective manner. Finally, the cytochrome P450 monooxygenase mpsF catalyzes the hydroxylation at C20 to yield the end product macrophasetin C. The chain is Cytochrome P450 monooxygenase mpsF from Macrophomina phaseolina (strain MS6) (Charcoal rot fungus).